Consider the following 103-residue polypeptide: c-Myc-binding protein (103 aa).

Belongs to the AMY1 family. As to quaternary structure, binds via its C-terminal region to the N-terminal region of MYC. Associates with AKAP1/S-AKAP84. Interacts with MYCBPAP. Interacts with CFAP91.

The protein localises to the cytoplasm. It localises to the nucleus. Its function is as follows. May control the transcriptional activity of MYC. Stimulates the activation of E box-dependent transcription by MYC. This is c-Myc-binding protein (MYCBP) from Pongo abelii (Sumatran orangutan).